A 247-amino-acid polypeptide reads, in one-letter code: Probable transcriptional regulatory protein Dvul_0986 (247 aa).

Residues 1–22 are disordered; it reads MAGHSKWANIQHRKGRQDAKRG.

It belongs to the TACO1 family.

It is found in the cytoplasm. The protein is Probable transcriptional regulatory protein Dvul_0986 of Nitratidesulfovibrio vulgaris (strain DP4) (Desulfovibrio vulgaris).